The chain runs to 150 residues: MIP18 family protein FAM96A (150 aa).

It belongs to the MIP18 family.

Functionally, may play a role in chromosome segregation through establishment of sister chromatid cohesion. The protein is MIP18 family protein FAM96A (fam96A) of Dictyostelium discoideum (Social amoeba).